Reading from the N-terminus, the 481-residue chain is Acetyltransferase peniE (481 aa).

Residues histidine 164 and aspartate 411 each act as proton acceptor in the active site.

Belongs to the plant acyltransferase family. In terms of assembly, monomer.

In terms of biological role, acetyltransferase; part of the gene cluster that mediates the biosynthesis of penifulvin A, a potent insecticidal sesquiterpene that features a [5.5.5.6]dioxafenestrane ring. The first step of the pathway is performed by the sesquiterpene cyclase peniA that generates the angular triquinane scaffold silphinene via cyclization of the linear farnesyl pyrophosphate (FPP). The cytochrome P450 monooxygenase peniB and the flavin-dependent monooxygenase peniC then catalyze a series of oxidation reactions to transform silphinene into penifulvin A. The dioxygenases peniD and peniF, as well as the acetyltransferase peniE, do not seem to be involved in the biosynthesis of penifulvin A. The polypeptide is Acetyltransferase peniE (Penicillium patulum (Penicillium griseofulvum)).